Here is a 240-residue protein sequence, read N- to C-terminus: MYLLLYVDDILLTGSSNTLLNMLIFQLSSTFSMKDLGPVHYFLGIQIKTHPSGLFLSQTKYAEQILNNAGMLDCKPMSTPLPLKLNSSVSTAKYPDPSDFRSIVGALQYLTLTRPDISYAVNIVCQRMHEPTLADFDLLKRVLRYVKGTIFHGLYIHKNSKLNVQAFCDSDWAGCTSTRRSTTGFCTFLGCNIISWSAKRQPTVSRSSTETEYRALALTAAELTWSSASRSRDPSAMNTN.

The protein localises to the mitochondrion. This is an uncharacterized protein from Arabidopsis thaliana (Mouse-ear cress).